Here is a 91-residue protein sequence, read N- to C-terminus: UPF0358 protein SAB0977 (91 aa).

This sequence belongs to the UPF0358 family.

The sequence is that of UPF0358 protein SAB0977 from Staphylococcus aureus (strain bovine RF122 / ET3-1).